The sequence spans 155 residues: Phytohormone-binding protein CSBP (155 aa).

Trans-zeatin-binding positions include Leu22, Gln67, Glu69, and 139 to 142 (TLMY). Gln67 is a gibberellin A3 binding site. Thr139 contributes to the gibberellin A3 binding site.

It belongs to the BetVI family. In terms of assembly, monomer.

Its function is as follows. Binds the cytokinin trans-zeatin in vitro. Binds gibberellin A3 (GA3) in vitro. In Vigna radiata var. radiata (Mung bean), this protein is Phytohormone-binding protein CSBP.